The primary structure comprises 563 residues: Arginine--tRNA ligase (563 aa).

A 'HIGH' region motif is present at residues 122 to 132 (PNIAKPISMGH).

This sequence belongs to the class-I aminoacyl-tRNA synthetase family. Monomer.

Its subcellular location is the cytoplasm. The enzyme catalyses tRNA(Arg) + L-arginine + ATP = L-arginyl-tRNA(Arg) + AMP + diphosphate. The sequence is that of Arginine--tRNA ligase from Latilactobacillus sakei subsp. sakei (strain 23K) (Lactobacillus sakei subsp. sakei).